The sequence spans 153 residues: MRDRMERLVVLPFSIGCISVSSVAVLSPLSKPHHHHSRQVIREQEEEDNMKNVFKFLAVSKPEISIGINRIFKSFKTISQLFADKDEEKEEVETSGMEIGVPTNVKHVSHIGWESGLTAATGPGKGWEDLIPPELLAAAASKKEINPHLHPTL.

The 14-residue stretch at 99–112 (IGVPTNVKHVSHIG) folds into the CRIB domain.

In terms of assembly, interacts with ARAC4/ROP2 and ARAC11/ROP1. Expressed in roots, leaves, stems, flowers, siliques and pollen.

Its subcellular location is the cell membrane. In terms of biological role, functions as a downstream effector of Rho-related GTP binding proteins of the 'Rho of Plants' (ROPs) family. Participates in the propagation of ROP GTPase signals in specific cellular responses. Required for actin cortical microfilament assembly. Activated by ARAC4/ROP2 to promote the assembly of cortical actin microfilaments required for lobe formation and lateral expansion of pavement cells. Interaction with, and activation by ARAC4/ROP2 is inhibited by RIC1. Functions as a downstream effector of ARAC11/ROP1 to promote the assembly of apical F-actin associated with vesicle accumulation in the tip of the growing pollen tube. Counteracts the ARAC11/ROP1-RIC3 pathway, which activates calcium signaling that leads to apical F-actin disassembly associated with exocytosis, to control actin dynamics and pollen tube apical growth. Downstream of ARAC11/ROP1, is involved in the growth responses to the root-colonizing endophytic fungus P.indica. The sequence is that of CRIB domain-containing protein RIC4 (RIC4) from Arabidopsis thaliana (Mouse-ear cress).